The chain runs to 102 residues: Matrix Gla protein (102 aa).

Phosphoserine is present on residues serine 2, serine 3, and serine 5. Residues 18–45 (DANSFMRQPRPPNHWDSRDRFKSPRERT) are disordered. Residues 27–73 (RPPNHWDSRDRFKSPRERTREKCEEYRPCERLARQVGLKRAYGKYFG) enclose the Gla domain. Positions 30-45 (NHWDSRDRFKSPRERT) are enriched in basic and acidic residues. 4 positions are modified to 4-carboxyglutamate: glutamate 43, glutamate 47, glutamate 50, and glutamate 51. Cysteine 49 and cysteine 55 form a disulfide bridge. The segment at 72-102 (FGNRRQRPSTSGRLRPRKYRASRYRNHHYRY) is disordered. Over residues 85-102 (LRPRKYRASRYRNHHYRY) the composition is skewed to basic residues.

This sequence belongs to the osteocalcin/matrix Gla protein family. Requires vitamin K-dependent gamma-carboxylation for its function. As to expression, accounts for 35-40% of the total protein in the acid demineralization extract of calcified cartilage.

The protein localises to the secreted. Associates with the organic matrix of calcified cartilage. The sequence is that of Matrix Gla protein (mgp) from Galeorhinus galeus (Tope shark).